The following is a 908-amino-acid chain: Flap endonuclease GEN homolog 1 (908 aa).

Positions G2–S96 are XPG-N domain. 7 residues coordinate Mg(2+): D30, E75, E134, E136, D155, D157, and D208. The tract at residues E122 to D208 is XPG-I domain. Residues D208–M384 are 5'-3' exonuclease domain. Residues G390–K464 are chromodomain. Phosphoserine occurs at positions 801 and 802.

Belongs to the XPG/RAD2 endonuclease family. GEN subfamily. In terms of assembly, largely monomeric, dimerizes on the Holliday junction and the first nick occurs upon dimerization at the junction. Mg(2+) serves as cofactor.

The protein localises to the nucleus. Its function is as follows. Endonuclease which resolves Holliday junctions (HJs) by the introduction of symmetrically related cuts across the junction point, to produce nicked duplex products in which the nicks can be readily ligated. Four-way DNA intermediates, also known as Holliday junctions, are formed during homologous recombination and DNA repair, and their resolution is necessary for proper chromosome segregation. Cleaves HJs by a nick and counter-nick mechanism involving dual coordinated incisions that lead to the formation of ligatable nicked duplex products. Cleavage of the first strand is rate limiting, while second strand cleavage is rapid. Largely monomeric, dimerizes on the HJ and the first nick occurs upon dimerization at the junction. Efficiently cleaves both single and double HJs contained within large recombination intermediates. Exhibits a weak sequence preference for incision between two G residues that reside in a T-rich region of DNA. Also has endonuclease activity on 5'-flap and replication fork (RF) DNA substrates. The protein is Flap endonuclease GEN homolog 1 (GEN1) of Homo sapiens (Human).